The sequence spans 668 residues: Auxilin-like clathrin uncoating factor SWA2 (668 aa).

Residues 1–95 (MSDPFAHLLT…ANNTPPSALA (95 aa)) form a disordered region. The interval 1 to 100 (MSDPFAHLLT…PSALANTDDD (100 aa)) is CB1. Polar residues predominate over residues 17–36 (SASASKETTPQSSNSPSITG). Phosphoserine occurs at positions 52 and 64. Low complexity predominate over residues 76–92 (PTNSTTKSNTANNTPPS). In terms of domain architecture, UBA spans 140-180 (DEVKDMEIARLMSLGLSIEEATEFYENDVTYERYLEILKSK). The interval 238–302 (EANDRLNNYS…FETKIDITKR (65 aa)) is CB2. S264, S308, and S312 each carry phosphoserine. Disordered stretches follow at residues 302–323 (RTAP…EENS) and 339–359 (EGNL…ENSN). The segment at 303–362 (TAPDVSHSSSPTSGILIEENSRRNEPLIEDSLLDFSEGNLTNSKSNEDSTLFNENSNTDS) is CB3. Polar residues predominate over residues 340–359 (GNLTNSKSNEDSTLFNENSN). TPR repeat units lie at residues 374–407 (YNEF…LPLN), 412–445 (IIAL…FPSS), and 467–500 (PKIM…NFFD). The interval 511–556 (QDFINPPPVKKSMPVKKKTTTTSPATKKQNLTASSSNSPISVDSTS) is disordered. Residues 539–555 (QNLTASSSNSPISVDST) show a composition bias toward polar residues. The J domain occupies 603–668 (CNWKDVSMQD…DKFKLQNDIN (66 aa)).

In terms of assembly, interacts with the clathrin light and heavy chains CLC1 and CHC1, respectively. Binds to clathrin with its N-terminal domain containing 3 clathrin-binding (CB) motifs. Association with clathrin is transient. Binds to polyubiquitin and ubiquitinated proteins.

The protein resides in the cytoplasm. It localises to the endoplasmic reticulum membrane. In terms of biological role, cofactor for the uncoating of clathrin-coated vesicles (CCVs) by Hsp70-type chaperones (SSA1/2/3 and SSB1/2). Coat disassembly is important for fusion of vesicles with target membranes and for recycling components of clathrin coats to the cytoplasm for further rounds of vesicle formation. Binds to assembled clathrin and recruits the ATP-activated chaperone to CCVs. Stimulates the ATPase activity of the clathrin-associated Hsp70-type chaperone SSA1, which then disrupts clathrin-clathrin interactions, leading to release of the clathrin coat. In addition, prevents unproductive clathrin assembly in the cell. Also required for cortical endoplasmic reticulum inheritance. This is Auxilin-like clathrin uncoating factor SWA2 (SWA2) from Saccharomyces cerevisiae (strain ATCC 204508 / S288c) (Baker's yeast).